We begin with the raw amino-acid sequence, 288 residues long: 4-hydroxybenzoate octaprenyltransferase (288 aa).

8 helical membrane passes run 23-43, 46-66, 98-118, 141-161, 165-185, 213-233, 234-254, and 268-288; these read IGSL…GKGI, TKIL…GCVV, ILFV…NSMT, LPQV…FAAV, LPLV…AYDT, LIIG…GWLM, NLGG…VHQQ, and AFLN…ISYL.

It belongs to the UbiA prenyltransferase family. The cofactor is Mg(2+).

The protein resides in the cell inner membrane. The enzyme catalyses all-trans-octaprenyl diphosphate + 4-hydroxybenzoate = 4-hydroxy-3-(all-trans-octaprenyl)benzoate + diphosphate. It functions in the pathway cofactor biosynthesis; ubiquinone biosynthesis. Catalyzes the prenylation of para-hydroxybenzoate (PHB) with an all-trans polyprenyl group. Mediates the second step in the final reaction sequence of ubiquinone-8 (UQ-8) biosynthesis, which is the condensation of the polyisoprenoid side chain with PHB, generating the first membrane-bound Q intermediate 3-octaprenyl-4-hydroxybenzoate. This Yersinia enterocolitica serotype O:8 / biotype 1B (strain NCTC 13174 / 8081) protein is 4-hydroxybenzoate octaprenyltransferase.